Here is a 408-residue protein sequence, read N- to C-terminus: Putative transporter AmpG 2 (408 aa).

A run of 12 helical transmembrane segments spans residues 10–30, 49–69, 84–104, 109–129, 154–174, 177–197, 224–244, 261–281, 294–311, 315–337, 353–373, and 378–398; these read YISN…IYLL, IGLF…GPLL, YCLI…TNFN, FIPF…YDML, FRIG…IISW, VYRS…IYPL, WLII…LSIM, LGYK…GGFL, ALIY…LYFY, ITSL…SPFF, IALI…ISGY, and LGWT…YILI.

This sequence belongs to the major facilitator superfamily.

It is found in the cell inner membrane. This Rickettsia felis (strain ATCC VR-1525 / URRWXCal2) (Rickettsia azadi) protein is Putative transporter AmpG 2 (ampG2).